The primary structure comprises 350 residues: HTH-type DNA-binding transcriptional activator EutR (350 aa).

One can recognise an HTH araC/xylS-type domain in the interval S243 to Q344. 2 consecutive DNA-binding regions (H-T-H motif) follow at residues L260–L281 and V311–F334.

Its pathway is amine and polyamine degradation; ethanolamine degradation. Activates the transcription of the eut operon, allowing utilization of ethanolamine (EA). Positively regulates its own transcription. Probably binds EA and vitamin B12 as effectors. Competes with ethanolamine ammonia-lysase (EAL, the first enzyme in the EA degradation pathway) for adenosylcobalamin. Ethanolamine-associated signaling mediated via this protein, but not EA degradation, impacts S.typhimurium survival within macrophages. Binds the promoter of ssrB and eutS in vitro; in mouse infection models binding to ssrB probably induces all 4 operons of pathogenicity island SPI-2. Functionally, expression of the eut operon allows this bacteria to use ethanolamine (EA) as a carbon, nitrogen and energy source. It relies on cobalamin (vitamin B12) both as a cofactor for the ethanolamine ammonia-lyase (EAL) activity and to induce the operon. EA enhances bacterial survival in macrophages in a concentration-dependent manner, suggesting it is an important nutrient in infection. The chain is HTH-type DNA-binding transcriptional activator EutR from Salmonella typhimurium (strain LT2 / SGSC1412 / ATCC 700720).